The following is a 213-amino-acid chain: uncharacterized protein (213 aa).

3 helical membrane passes run 26 to 46, 112 to 132, and 136 to 156; these read FINFIRIAIFIVMAWIGGLKV, ASYIIGAIIVTVGILTLAGIW, and AGLAGGLLTFGMSIVTLSFLI.

Its subcellular location is the cell membrane. This is an uncharacterized protein from Haemophilus influenzae (strain ATCC 51907 / DSM 11121 / KW20 / Rd).